Consider the following 185-residue polypeptide: Ribosome-recycling factor (185 aa).

A disordered region spans residues 141-161 (KQEKDKKISEDDLKRAEKEVQ).

It belongs to the RRF family.

The protein localises to the cytoplasm. Functionally, responsible for the release of ribosomes from messenger RNA at the termination of protein biosynthesis. May increase the efficiency of translation by recycling ribosomes from one round of translation to another. The sequence is that of Ribosome-recycling factor from Geotalea uraniireducens (strain Rf4) (Geobacter uraniireducens).